We begin with the raw amino-acid sequence, 407 residues long: Steroid 3-ketoacyl-CoA thiolase FadA6 (407 aa).

C110 acts as the Acyl-thioester intermediate in catalysis. CoA is bound by residues Q178, 237-239 (RES), and S262. Active-site proton acceptor residues include H363 and C393. G395 is a substrate binding site.

Belongs to the thiolase-like superfamily. Thiolase family.

It catalyses the reaction an acyl-CoA + acetyl-CoA = a 3-oxoacyl-CoA + CoA. The catalysed reaction is 6-methyl-3,7-dioxodecanedioyl-CoA + CoA = 4-methyl-5-oxo-octanedioyl-CoA + acetyl-CoA. The protein operates within steroid metabolism; cholesterol degradation. May be involved in the final steps of cholesterol and steroid degradation. Catalyzes the formation of 4-methyl-5-oxo-octanedioyl-CoA (MOODA-CoA) and acetyl-CoA from 6-methyl-3,7-dioxodecanedioyl-CoA (MeDODA-CoA) and coenzyme A. The polypeptide is Steroid 3-ketoacyl-CoA thiolase FadA6 (Mycobacterium tuberculosis (strain ATCC 25618 / H37Rv)).